A 318-amino-acid polypeptide reads, in one-letter code: Putative enoyl-CoA hydratase EchA13 (318 aa).

The disordered stretch occupies residues 90-110 (LGSADDIRERSPGPDQHPSYR).

It belongs to the enoyl-CoA hydratase/isomerase family.

This chain is Putative enoyl-CoA hydratase EchA13 (echA13), found in Mycobacterium tuberculosis (strain ATCC 25618 / H37Rv).